The following is a 497-amino-acid chain: Angiopoietin-1 (497 aa).

An N-terminal signal peptide occupies residues 1-19; it reads MTVFLSFAFLAAILTHIGC. N-linked (GlcNAc...) asparagine glycans are attached at residues Asn-92, Asn-122, Asn-154, Asn-243, and Asn-294. Residues 158-256 are a coiled coil; that stretch reads RLEIQLLENS…LQKQQLELMD (99 aa). The region spanning 276-496 is the Fibrinogen C-terminal domain; it reads KEEEKPFRDC…STTMMIRPLD (221 aa). 2 disulfide bridges follow: Cys-285-Cys-314 and Cys-438-Cys-451.

In terms of assembly, homooligomer. Interacts with TEK/TIE2. Interacts with SVEP1/polydom. Interacts with THBD; this interaction significantly inhibits the generation of activated PC and TAFIa/CPB2 by the thrombin/thrombomodulin complex.

It localises to the secreted. Its function is as follows. Binds and activates TIE2 receptor by inducing its tyrosine phosphorylation. Implicated in endothelial developmental processes later and distinct from that of VEGF. Appears to play a crucial role in mediating reciprocal interactions between the endothelium and surrounding matrix and mesenchyme. Mediates blood vessel maturation/stability. It may play an important role in the heart early development. In Canis lupus familiaris (Dog), this protein is Angiopoietin-1 (ANGPT1).